Consider the following 300-residue polypeptide: NAD kinase (300 aa).

The active-site Proton acceptor is the D75. NAD(+) contacts are provided by residues 75-76, 149-150, R177, D179, 190-195, A214, and Q248; these read DG, ND, and TAYALS.

The protein belongs to the NAD kinase family. The cofactor is a divalent metal cation.

Its subcellular location is the cytoplasm. It catalyses the reaction NAD(+) + ATP = ADP + NADP(+) + H(+). Functionally, involved in the regulation of the intracellular balance of NAD and NADP, and is a key enzyme in the biosynthesis of NADP. Catalyzes specifically the phosphorylation on 2'-hydroxyl of the adenosine moiety of NAD to yield NADP. The sequence is that of NAD kinase from Burkholderia multivorans (strain ATCC 17616 / 249).